The primary structure comprises 257 residues: Protein orai-2 (257 aa).

Helical transmembrane passes span 67–84 (TSAL…EVQL), 95–115 (LIAF…ALLI), 149–169 (LAWG…VVLL), and 199–219 (AALV…VFTI).

The protein belongs to the Orai family.

The protein localises to the membrane. In terms of biological role, ca(2+) release-activated Ca(2+)-like (CRAC-like) channel subunit which mediates Ca(2+) influx and increase in Ca(2+)-selective current by synergy with the Ca(2+) sensor, STIM1. In Gallus gallus (Chicken), this protein is Protein orai-2 (ORAI2).